A 371-amino-acid polypeptide reads, in one-letter code: MNKMNRKFSKLLKNPHIFFRDFLNKKYPIKNTELPFSESEEANLIEANQKLDKIIQKNTLQQANIDVVFTWVDGSDPSWQAKYSQYAPNYQAKSALYATDIARFEDHNELYYSVHAVLKYMPWVRHIFIITDNQKPKWLDETRQEKITLIDHQDIIDKEYLPTFNSHVIEAFLHKIPNLSENFIYFNDDVFIARELQAEHFFQANGIASIFVSEKSLSKMRDKGIITPTLSASEYSIRLLNKYYDTNIDSPLVHTYIPLKKSMYELAWLRYEKAILGFLPNKLRTNNDLNFANFLIPWLMYFEGKAMPKIDICYYFNIRSPNAISLYKKLLLKQQMGEEPNSFCANDFNSNYSIENYRNNLISTLNNYYKF.

This sequence belongs to the stealth family.

Its function is as follows. Part of a capsular polysaccharide synthesis locus. The polypeptide is Capsular polysaccharide phosphotransferase cps12A (cps12A) (Actinobacillus pleuropneumoniae (Haemophilus pleuropneumoniae)).